The sequence spans 316 residues: Aspartate carbamoyltransferase catalytic subunit (316 aa).

Residues Arg56 and Thr57 each coordinate carbamoyl phosphate. Lys84 contacts L-aspartate. Residues Arg106, His139, and Gln142 each coordinate carbamoyl phosphate. Arg172 and Arg224 together coordinate L-aspartate. The carbamoyl phosphate site is built by Gly268 and Pro269.

This sequence belongs to the aspartate/ornithine carbamoyltransferase superfamily. ATCase family. As to quaternary structure, heterododecamer (2C3:3R2) of six catalytic PyrB chains organized as two trimers (C3), and six regulatory PyrI chains organized as three dimers (R2).

The catalysed reaction is carbamoyl phosphate + L-aspartate = N-carbamoyl-L-aspartate + phosphate + H(+). It functions in the pathway pyrimidine metabolism; UMP biosynthesis via de novo pathway; (S)-dihydroorotate from bicarbonate: step 2/3. Catalyzes the condensation of carbamoyl phosphate and aspartate to form carbamoyl aspartate and inorganic phosphate, the committed step in the de novo pyrimidine nucleotide biosynthesis pathway. This is Aspartate carbamoyltransferase catalytic subunit from Ligilactobacillus salivarius (strain UCC118) (Lactobacillus salivarius).